Reading from the N-terminus, the 301-residue chain is D-alanine--D-alanine ligase (301 aa).

The ATP-grasp domain occupies 99–294 (KSVLEANGIR…FSELIDMIIQ (196 aa)). Position 126 to 181 (126 to 181 (INELGYPVVVKPTHGGSSVATFIVKEEKEIENCVSEAFKWDSEVMIEKFIKGDEIT)) interacts with ATP. Mg(2+) contacts are provided by aspartate 248, glutamate 261, and asparagine 263.

Belongs to the D-alanine--D-alanine ligase family. The cofactor is Mg(2+). It depends on Mn(2+) as a cofactor.

The protein localises to the cytoplasm. The catalysed reaction is 2 D-alanine + ATP = D-alanyl-D-alanine + ADP + phosphate + H(+). It functions in the pathway cell wall biogenesis; peptidoglycan biosynthesis. In terms of biological role, cell wall formation. In Clostridium beijerinckii (strain ATCC 51743 / NCIMB 8052) (Clostridium acetobutylicum), this protein is D-alanine--D-alanine ligase.